A 343-amino-acid chain; its full sequence is Anthranilate phosphoribosyltransferase (343 aa).

5-phospho-alpha-D-ribose 1-diphosphate contacts are provided by residues G84, 87-88 (GD), T92, 94-97 (NIST), 112-120 (KHGNRSASS), and S124. Position 84 (G84) interacts with anthranilate. Residue S96 coordinates Mg(2+). An anthranilate-binding site is contributed by N115. R170 provides a ligand contact to anthranilate. Mg(2+)-binding residues include D229 and E230.

This sequence belongs to the anthranilate phosphoribosyltransferase family. Homodimer. The cofactor is Mg(2+).

The enzyme catalyses N-(5-phospho-beta-D-ribosyl)anthranilate + diphosphate = 5-phospho-alpha-D-ribose 1-diphosphate + anthranilate. It functions in the pathway amino-acid biosynthesis; L-tryptophan biosynthesis; L-tryptophan from chorismate: step 2/5. Functionally, catalyzes the transfer of the phosphoribosyl group of 5-phosphorylribose-1-pyrophosphate (PRPP) to anthranilate to yield N-(5'-phosphoribosyl)-anthranilate (PRA). This Bordetella pertussis (strain Tohama I / ATCC BAA-589 / NCTC 13251) protein is Anthranilate phosphoribosyltransferase.